The primary structure comprises 72 residues: Small ribosomal subunit protein bS18c (72 aa).

The protein belongs to the bacterial ribosomal protein bS18 family. Part of the 30S ribosomal subunit.

It is found in the plastid. The protein localises to the chloroplast. This chain is Small ribosomal subunit protein bS18c, found in Phaeodactylum tricornutum (strain CCAP 1055/1).